Here is a 56-residue protein sequence, read N- to C-terminus: Small ribosomal subunit protein uS14 (56 aa).

Zn(2+)-binding residues include Cys21, Cys24, Cys39, and Cys42.

This sequence belongs to the universal ribosomal protein uS14 family. As to quaternary structure, component of the small ribosomal subunit (SSU). Mature N.crassa ribosomes consist of a small (40S) and a large (60S) subunit. The 40S small subunit contains 1 molecule of ribosomal RNA (18S rRNA) and at least 32 different proteins. The large 60S subunit contains 3 rRNA molecules (26S, 5.8S and 5S rRNA) and at least 42 different proteins. It depends on Zn(2+) as a cofactor.

It localises to the cytoplasm. Component of the ribosome, a large ribonucleoprotein complex responsible for the synthesis of proteins in the cell. The small ribosomal subunit (SSU) binds messenger RNAs (mRNAs) and translates the encoded message by selecting cognate aminoacyl-transfer RNA (tRNA) molecules. The large subunit (LSU) contains the ribosomal catalytic site termed the peptidyl transferase center (PTC), which catalyzes the formation of peptide bonds, thereby polymerizing the amino acids delivered by tRNAs into a polypeptide chain. The nascent polypeptides leave the ribosome through a tunnel in the LSU and interact with protein factors that function in enzymatic processing, targeting, and the membrane insertion of nascent chains at the exit of the ribosomal tunnel. This is Small ribosomal subunit protein uS14 (rps-29) from Neurospora crassa (strain ATCC 24698 / 74-OR23-1A / CBS 708.71 / DSM 1257 / FGSC 987).